The sequence spans 812 residues: ATP-dependent DNA helicase PIF3 (812 aa).

247–254 (GSAGTGKT) provides a ligand contact to ATP. A DNA-binding region spans residues 741-761 (HLVYVACSRVRSMDQLIVRNV).

It belongs to the helicase family. PIF1 subfamily. Monomer. It depends on Mg(2+) as a cofactor.

It is found in the cytoplasm. The enzyme catalyses Couples ATP hydrolysis with the unwinding of duplex DNA at the replication fork by translocating in the 5'-3' direction. This creates two antiparallel DNA single strands (ssDNA). The leading ssDNA polymer is the template for DNA polymerase III holoenzyme which synthesizes a continuous strand.. It carries out the reaction ATP + H2O = ADP + phosphate + H(+). Its function is as follows. DNA-dependent ATPase and 5'-3' DNA helicase required for the maintenance of genome stability. This Trypanosoma brucei brucei (strain 927/4 GUTat10.1) protein is ATP-dependent DNA helicase PIF3.